The following is a 121-amino-acid chain: Nitrogenase-stabilizing/protective protein NifW (121 aa).

It belongs to the NifW family. In terms of assembly, homotrimer; associates with NifD.

Functionally, may protect the nitrogenase Fe-Mo protein from oxidative damage. In Synechococcus sp. (strain JA-2-3B'a(2-13)) (Cyanobacteria bacterium Yellowstone B-Prime), this protein is Nitrogenase-stabilizing/protective protein NifW.